The following is a 310-amino-acid chain: p-hydroxybenzoic acid efflux pump subunit AaeA (310 aa).

Residues 12–32 (AITVVLVILAFIAIFNAWVYY) traverse the membrane as a helical segment.

This sequence belongs to the membrane fusion protein (MFP) (TC 8.A.1) family.

The protein localises to the cell inner membrane. Its function is as follows. Forms an efflux pump with AaeB. The protein is p-hydroxybenzoic acid efflux pump subunit AaeA of Escherichia coli O127:H6 (strain E2348/69 / EPEC).